The following is a 198-amino-acid chain: Ribose 1,5-bisphosphate phosphokinase PhnN (198 aa).

ATP is bound at residue 25-32 (GPSGAGKD).

Belongs to the ribose 1,5-bisphosphokinase family.

The enzyme catalyses alpha-D-ribose 1,5-bisphosphate + ATP = 5-phospho-alpha-D-ribose 1-diphosphate + ADP. It functions in the pathway metabolic intermediate biosynthesis; 5-phospho-alpha-D-ribose 1-diphosphate biosynthesis; 5-phospho-alpha-D-ribose 1-diphosphate from D-ribose 5-phosphate (route II): step 3/3. In terms of biological role, catalyzes the phosphorylation of ribose 1,5-bisphosphate to 5-phospho-D-ribosyl alpha-1-diphosphate (PRPP). The protein is Ribose 1,5-bisphosphate phosphokinase PhnN of Bradyrhizobium diazoefficiens (strain JCM 10833 / BCRC 13528 / IAM 13628 / NBRC 14792 / USDA 110).